Reading from the N-terminus, the 176-residue chain is Ribosome maturation factor RimM (176 aa).

A PRC barrel domain is found at 100–173; that stretch reads EGEFHLLDLV…WLRLTPPPGL (74 aa).

This sequence belongs to the RimM family. In terms of assembly, binds ribosomal protein uS19.

The protein localises to the cytoplasm. An accessory protein needed during the final step in the assembly of 30S ribosomal subunit, possibly for assembly of the head region. Essential for efficient processing of 16S rRNA. May be needed both before and after RbfA during the maturation of 16S rRNA. It has affinity for free ribosomal 30S subunits but not for 70S ribosomes. In Prochlorococcus marinus (strain MIT 9313), this protein is Ribosome maturation factor RimM.